We begin with the raw amino-acid sequence, 272 residues long: GEM-like protein 5 (272 aa).

Residues methionine 1–histidine 42 form a disordered region. The span at glutamate 16–proline 27 shows a compositional bias: basic and acidic residues. In terms of domain architecture, GRAM spans serine 143 to valine 221.

This sequence belongs to the GEM family.

This chain is GEM-like protein 5, found in Arabidopsis thaliana (Mouse-ear cress).